A 139-amino-acid polypeptide reads, in one-letter code: Mannose-specific lectin (139 aa).

One can recognise a Bulb-type lectin domain in the interval 1-109; sequence DNILYSGETL…ARWATGTNIH (109 aa). Alpha-D-mannopyranose-binding residues include Gln-26, Asp-28, Asn-30, Tyr-34, Asp-37, Lys-38, Trp-41, Ala-42, Asn-44, Gln-57, Asp-59, Asn-61, Tyr-65, Ile-72, Trp-73, Asn-76, Asn-83, Gln-89, Asp-91, Asn-93, Tyr-97, and Trp-102. Residues Cys-29 and Cys-52 are joined by a disulfide bond.

Homotetramer; antiparallel. As to expression, detected in bulbs (at protein level).

The protein localises to the secreted. Mannose-specific lectin. Displays antiviral activity and therefore may contribute to defense against infections. Shows agglutinating activity towards rabbit erythrocytes. In Narcissus tazetta (Cream narcissus), this protein is Mannose-specific lectin.